Reading from the N-terminus, the 648-residue chain is Protein associated with UVRAG as autophagy enhancer (648 aa).

2 stretches are compositionally biased toward polar residues: residues Q131–S146 and P157–R173. Residues Q131–R173 are disordered. S144 is subject to Phosphoserine. Residues E183–E222 are interaction with UVRAG. N6-acetyllysine occurs at positions 469, 509, 519, 559, and 619.

In terms of assembly, interacts with UVRAG; the interaction is direct and promotes association with the PI3K/PI3KC3 and HOPS complexes. Interacts with STX17. In terms of processing, phosphorylated by MTOR at Ser-144 under nutrient-rich conditions. Phosphorylation prevents acetylation by KAT5/TIP60 and impairs RUBCNL/PACER function and autophagosome maturation. Under autophagy induction, Phosphorylation by MTOR is repressed, enabling acetylation by KAT5/TIP60. Acetylated by KAT5/TIP60 under autophagy induction, promoting autophagosome maturation and lipid metabolism. Acetylation is prevented by phosphorylation by MTOR. Lys-469 and Lys-559 constitute the key sites for tuning function in autophagy.

The protein resides in the cytoplasmic vesicle. It is found in the autophagosome membrane. Regulator of autophagy that promotes autophagosome maturation by facilitating the biogenesis of phosphatidylinositol 3-phosphate (PtdIns(3)P) in late steps of autophagy. Acts by antagonizing RUBCN, thereby stimulating phosphatidylinositol 3-kinase activity of the PI3K/PI3KC3 complex. Following anchorage to the autophagosomal SNARE STX17, promotes the recruitment of PI3K/PI3KC3 and HOPS complexes to the autophagosome to regulate the fusion specificity of autophagosomes with late endosomes/lysosomes. Binds phosphoinositides phosphatidylinositol 3-phosphate (PtdIns(3)P), 4-phosphate (PtdIns(4)P) and 5-phosphate (PtdIns(5)P). In addition to its role in autophagy, acts as a regulator of lipid and glycogen homeostasis. May act as a tumor suppressor. The protein is Protein associated with UVRAG as autophagy enhancer of Mus musculus (Mouse).